The chain runs to 600 residues: Cytidine monophosphate-N-acetylneuraminic acid hydroxylase (600 aa).

Residues 9–107 (LSPVEVASLK…VEMDENNRLL (99 aa)) form the Rieske domain. Residues Cys49, His51, Cys70, and His73 each contribute to the [2Fe-2S] cluster site.

It belongs to the CMP-Neu5Ac hydroxylase family. [2Fe-2S] cluster is required as a cofactor.

Its subcellular location is the cytoplasm. The enzyme catalyses CMP-N-acetyl-beta-neuraminate + 2 Fe(II)-[cytochrome b5] + O2 + 2 H(+) = CMP-N-glycoloyl-beta-neuraminate + 2 Fe(III)-[cytochrome b5] + H2O. Its pathway is amino-sugar metabolism; N-acetylneuraminate metabolism. Functionally, sialic acids are components of carbohydrate chains of glycoconjugates and are involved in cell-cell recognition and cell-pathogen interactions. Catalyzes the conversion of CMP-N-acetylneuraminic acid (CMP-Neu5Ac) into its hydroxylated derivative CMP-N-glycolylneuraminic acid (CMP-Neu5Gc), a sialic acid abundantly expressed at the surface of many cells. The chain is Cytidine monophosphate-N-acetylneuraminic acid hydroxylase (CMAH) from Gorilla gorilla gorilla (Western lowland gorilla).